The primary structure comprises 191 residues: RNA pyrophosphohydrolase (191 aa).

One can recognise a Nudix hydrolase domain in the interval 6-149 (GYRLNVGIIL…KREVYRQALS (144 aa)). The short motif at 38-59 (GGIKVDEDPDAAMFRELYEEVG) is the Nudix box element. Residues 162 to 191 (GAQAVSDAGGTATRQIPVATEPSGPSSSQR) form a disordered region.

This sequence belongs to the Nudix hydrolase family. RppH subfamily. A divalent metal cation is required as a cofactor.

Functionally, accelerates the degradation of transcripts by removing pyrophosphate from the 5'-end of triphosphorylated RNA, leading to a more labile monophosphorylated state that can stimulate subsequent ribonuclease cleavage. The polypeptide is RNA pyrophosphohydrolase (Methylococcus capsulatus (strain ATCC 33009 / NCIMB 11132 / Bath)).